The following is a 157-amino-acid chain: Transcription elongation factor GreA (157 aa).

Residues Met1–Val75 adopt a coiled-coil conformation.

This sequence belongs to the GreA/GreB family.

Functionally, necessary for efficient RNA polymerase transcription elongation past template-encoded arresting sites. The arresting sites in DNA have the property of trapping a certain fraction of elongating RNA polymerases that pass through, resulting in locked ternary complexes. Cleavage of the nascent transcript by cleavage factors such as GreA or GreB allows the resumption of elongation from the new 3'terminus. GreA releases sequences of 2 to 3 nucleotides. In Mycoplasma capricolum subsp. capricolum (strain California kid / ATCC 27343 / NCTC 10154), this protein is Transcription elongation factor GreA.